The chain runs to 150 residues: MLRTMFTGKIHRATVTQADLHYVGSVTVDQDLLDAAGILPGELVAVVDVTNGARLETYTIAGERGSGVLGINGAAAHLVHPGDLVILIAYGLMDTAEAQTYEPRVVHVDERNRIVALGSDPADAVVGDVVRPPHAREHGRAREDAATTRA.

The active-site Schiff-base intermediate with substrate; via pyruvic acid is the serine 25. Serine 25 bears the Pyruvic acid (Ser) mark. Position 57 (threonine 57) interacts with substrate. The active-site Proton donor is tyrosine 58. 73–75 (GAA) is a substrate binding site.

It belongs to the PanD family. Heterooctamer of four alpha and four beta subunits. It depends on pyruvate as a cofactor. Is synthesized initially as an inactive proenzyme, which is activated by self-cleavage at a specific serine bond to produce a beta-subunit with a hydroxyl group at its C-terminus and an alpha-subunit with a pyruvoyl group at its N-terminus.

It localises to the cytoplasm. The catalysed reaction is L-aspartate + H(+) = beta-alanine + CO2. It participates in cofactor biosynthesis; (R)-pantothenate biosynthesis; beta-alanine from L-aspartate: step 1/1. Catalyzes the pyruvoyl-dependent decarboxylation of aspartate to produce beta-alanine. This Kocuria rhizophila (strain ATCC 9341 / DSM 348 / NBRC 103217 / DC2201) protein is Aspartate 1-decarboxylase.